A 493-amino-acid polypeptide reads, in one-letter code: Probable cytochrome P450 508A2 (493 aa).

A helical transmembrane segment spans residues 1–21; sequence MIFGIIVYLFLIYILHNAYSK. Cys439 provides a ligand contact to heme.

This sequence belongs to the cytochrome P450 family. The cofactor is heme.

It is found in the membrane. The sequence is that of Probable cytochrome P450 508A2 (cyp508A2-1) from Dictyostelium discoideum (Social amoeba).